A 230-amino-acid chain; its full sequence is Probable nicotinate-nucleotide adenylyltransferase (230 aa).

Belongs to the NadD family.

The enzyme catalyses nicotinate beta-D-ribonucleotide + ATP + H(+) = deamido-NAD(+) + diphosphate. Its pathway is cofactor biosynthesis; NAD(+) biosynthesis; deamido-NAD(+) from nicotinate D-ribonucleotide: step 1/1. Catalyzes the reversible adenylation of nicotinate mononucleotide (NaMN) to nicotinic acid adenine dinucleotide (NaAD). The chain is Probable nicotinate-nucleotide adenylyltransferase from Pseudomonas putida (strain ATCC 47054 / DSM 6125 / CFBP 8728 / NCIMB 11950 / KT2440).